A 1290-amino-acid chain; its full sequence is DNA-directed RNA polymerase subunit beta' (1290 aa).

Residues Cys-68, Cys-70, Cys-83, and Cys-86 each contribute to the Zn(2+) site. Asp-530, Asp-532, and Asp-534 together coordinate Mg(2+). Residues Cys-909, Cys-985, Cys-992, and Cys-995 each contribute to the Zn(2+) site.

This sequence belongs to the RNA polymerase beta' chain family. As to quaternary structure, the RNAP catalytic core consists of 2 alpha, 1 beta, 1 beta' and 1 omega subunit. When a sigma factor is associated with the core the holoenzyme is formed, which can initiate transcription. Requires Mg(2+) as cofactor. Zn(2+) is required as a cofactor.

The enzyme catalyses RNA(n) + a ribonucleoside 5'-triphosphate = RNA(n+1) + diphosphate. Its function is as follows. DNA-dependent RNA polymerase catalyzes the transcription of DNA into RNA using the four ribonucleoside triphosphates as substrates. The protein is DNA-directed RNA polymerase subunit beta' of Mycoplasma pneumoniae (strain ATCC 29342 / M129 / Subtype 1) (Mycoplasmoides pneumoniae).